The following is a 574-amino-acid chain: Streptolysin O (574 aa).

The N-terminal stretch at 1-36 (MKDMSNKKIFKKYSRVAGLLTAALIVGNLVTANADS) is a signal peptide. Low complexity predominate over residues 37 to 52 (NKQNTANTETTTTNEQ). Disordered regions lie at residues 37–64 (NKQNTANTETTTTNEQPKPESSELTTEK) and 84–111 (KEMPLESAEKEEKKSEDNKKSEEDHTEE). Basic and acidic residues predominate over residues 53-64 (PKPESSELTTEK). Transmembrane regions (beta stranded) follow at residues 263–276 (KSQIEAALNVNSKI), 283–292 (IDFKSISKGE), 361–370 (SNDVEAAFSA), and 378–390 (KTNGKYSDILENS). Residues 532-542 (ECTGLAWEWWR) carry the Conserved undecapeptide motif. The short motif at 564–565 (TL) is the Cholesterol binding element.

This sequence belongs to the cholesterol-dependent cytolysin family. As to quaternary structure, homooligomeric pore complex of 35 to 50 subunits; when inserted in the host membrane.

It is found in the secreted. The protein resides in the host cell membrane. Functionally, a cholesterol-dependent toxin that causes cytolysis by forming pores in cholesterol containing host membranes. After binding to target membranes, the protein undergoes a major conformation change, leading to its insertion in the host membrane and formation of an oligomeric pore complex. Cholesterol is required for binding to host membranes, membrane insertion and pore formation; cholesterol binding is mediated by a Thr-Leu pair in the C-terminus. Can be reversibly inactivated by oxidation. This chain is Streptolysin O (slo), found in Streptococcus dysgalactiae subsp. equisimilis (Streptococcus equisimilis).